The primary structure comprises 75 residues: uncharacterized protein (75 aa).

This is an uncharacterized protein from Enterobacteria phage T4 (Bacteriophage T4).